Consider the following 345-residue polypeptide: Ribonucleoside-diphosphate reductase subunit beta (345 aa).

Fe cation contacts are provided by D88, E118, and H121. Residue Y125 is part of the active site. The Fe cation site is built by E185, E219, and H222.

The protein belongs to the ribonucleoside diphosphate reductase small chain family. Tetramer of two alpha and two beta subunits. Fe cation is required as a cofactor.

The enzyme catalyses a 2'-deoxyribonucleoside 5'-diphosphate + [thioredoxin]-disulfide + H2O = a ribonucleoside 5'-diphosphate + [thioredoxin]-dithiol. Provides the precursors necessary for DNA synthesis. Catalyzes the biosynthesis of deoxyribonucleotides from the corresponding ribonucleotides. This Halalkalibacterium halodurans (strain ATCC BAA-125 / DSM 18197 / FERM 7344 / JCM 9153 / C-125) (Bacillus halodurans) protein is Ribonucleoside-diphosphate reductase subunit beta (nrdB).